Consider the following 308-residue polypeptide: ATP synthase gamma chain (308 aa).

Belongs to the ATPase gamma chain family. F-type ATPases have 2 components, CF(1) - the catalytic core - and CF(0) - the membrane proton channel. CF(1) has five subunits: alpha(3), beta(3), gamma(1), delta(1), epsilon(1). CF(0) has three main subunits: a, b and c.

The protein resides in the cell membrane. Produces ATP from ADP in the presence of a proton gradient across the membrane. The gamma chain is believed to be important in regulating ATPase activity and the flow of protons through the CF(0) complex. The sequence is that of ATP synthase gamma chain from Mycobacteroides abscessus (strain ATCC 19977 / DSM 44196 / CCUG 20993 / CIP 104536 / JCM 13569 / NCTC 13031 / TMC 1543 / L948) (Mycobacterium abscessus).